A 129-amino-acid chain; its full sequence is Small ribosomal subunit protein uS11 (129 aa).

This sequence belongs to the universal ribosomal protein uS11 family. Part of the 30S ribosomal subunit. Interacts with proteins S7 and S18. Binds to IF-3.

Its function is as follows. Located on the platform of the 30S subunit, it bridges several disparate RNA helices of the 16S rRNA. Forms part of the Shine-Dalgarno cleft in the 70S ribosome. In Histophilus somni (strain 129Pt) (Haemophilus somnus), this protein is Small ribosomal subunit protein uS11.